Consider the following 434-residue polypeptide: MTVTDIASRTYNHGWRLDPIVRSLLDTDFYKLLMLQMIREFYPDQKVTFSVINRTKRVRLGDVIDEGELRAQLDHARTIRFTKKELIWLAGNTFYGKTHMFSPDFLAWLAHFRLPDYELHKADGQYELHFHGPWTHTTMWEIPALAIVNELRSRQAMKGQGRFALDVLFARAKAKLWAKVERLRRLEGLRLSDFGTRRRHGFLWQRWCVEAVKEGLGPSFTGTSNVLLAMDNDLEAIGTNAHELPMVAAALARDDDELRFAPYRILDQWRQTYAGNLLIALPDAFGTKAFLRDAPDWVADWTGFRPDSAPPIEAGEEIIAWWKSKGRDPKQKLLVFSDAMDVESIEQIHHRFSDRVRLSFGWGTNLTNDFVGCAPDGSVDLDPISLVCKVTSVDGQPAVKLSDNPEKATGDPAEIARYLRVFGDAGRVRTPVVV.

His242 bears the Phosphohistidine; by autocatalysis mark.

The protein belongs to the NAPRTase family. Transiently phosphorylated on a His residue during the reaction cycle. Phosphorylation strongly increases the affinity for substrates and increases the rate of nicotinate D-ribonucleotide production. Dephosphorylation regenerates the low-affinity form of the enzyme, leading to product release.

It carries out the reaction nicotinate + 5-phospho-alpha-D-ribose 1-diphosphate + ATP + H2O = nicotinate beta-D-ribonucleotide + ADP + phosphate + diphosphate. It participates in cofactor biosynthesis; NAD(+) biosynthesis; nicotinate D-ribonucleotide from nicotinate: step 1/1. In terms of biological role, catalyzes the synthesis of beta-nicotinate D-ribonucleotide from nicotinate and 5-phospho-D-ribose 1-phosphate at the expense of ATP. The chain is Nicotinate phosphoribosyltransferase from Bradyrhizobium sp. (strain BTAi1 / ATCC BAA-1182).